Consider the following 565-residue polypeptide: Granule-bound starch synthase 1b, chloroplastic/amyloplastic (565 aa).

A chloroplast-targeting transit peptide spans 1 to 34 (VFLSMRNKTQLAKRRATNYETHRNSSRTSSPIVC). Lys52 provides a ligand contact to ADP-alpha-D-glucose.

This sequence belongs to the glycosyltransferase 1 family. Bacterial/plant glycogen synthase subfamily.

It localises to the plastid. Its subcellular location is the chloroplast. The protein localises to the amyloplast. The catalysed reaction is an NDP-alpha-D-glucose + [(1-&gt;4)-alpha-D-glucosyl](n) = [(1-&gt;4)-alpha-D-glucosyl](n+1) + a ribonucleoside 5'-diphosphate + H(+). It functions in the pathway glycan biosynthesis; starch biosynthesis. In terms of biological role, involved in the synthesis of amylose in endosperm. This Hordeum vulgare (Barley) protein is Granule-bound starch synthase 1b, chloroplastic/amyloplastic.